Consider the following 781-residue polypeptide: Matrix non-peptidase homolog 1 (781 aa).

A signal peptide spans 1–27; it reads MTPPPASPSKKAKSSWLLIALIAVIIG. An N-linked (GlcNAc...) asparagine glycan is attached at asparagine 54. A compositionally biased stretch (low complexity) spans 63–94; sequence TSKATVSTTTTQSATTPSTTTTRIEETTTTTS. The segment at 63 to 113 is disordered; sequence TSKATVSTTTTQSATTPSTTTTRIEETTTTTSGAFDESVKNSEASTSTIPT. Asparagine 183, asparagine 341, asparagine 375, and asparagine 520 each carry an N-linked (GlcNAc...) asparagine glycan.

The protein is Matrix non-peptidase homolog 1 (mnp-1) of Caenorhabditis elegans.